Here is a 213-residue protein sequence, read N- to C-terminus: MMRPLPETGRRGLCLVVAAPSGAGKSSITRALLAEDPGLRLSVSVTTRAPRAGEQEGVHYYFRTQEEFDAMAAEGQLLEYARVFGRSYGTPRGPVQKALSEGSDVLFDVDWQGYHQLRSALPGDVVGIFVLPPSLDDLASRLEGRGDAPDIIAQRMAAARDEIAHVGEFPYVVVNTHLPEAIDQVRTILHAARTETKRQGWLRHWLGGLGLSE.

Residues Gly-12–His-190 form the Guanylate kinase-like domain. Ala-19–Ser-26 is an ATP binding site.

This sequence belongs to the guanylate kinase family.

The protein resides in the cytoplasm. The enzyme catalyses GMP + ATP = GDP + ADP. Its function is as follows. Essential for recycling GMP and indirectly, cGMP. The protein is Guanylate kinase of Granulibacter bethesdensis (strain ATCC BAA-1260 / CGDNIH1).